We begin with the raw amino-acid sequence, 283 residues long: Pyridoxine/pyridoxal/pyridoxamine kinase (283 aa).

Positions 23 and 59 each coordinate substrate. ATP is bound at residue D125. Mg(2+) is bound at residue Y136. Residues T157, E162, T195, 222 to 225 (HAHV), and T232 each bind ATP. E162 is a Mg(2+) binding site. Position 234 (D234) interacts with substrate.

This sequence belongs to the pyridoxine kinase family. PdxK subfamily. Homodimer. The cofactor is Mg(2+).

It carries out the reaction pyridoxal + ATP = pyridoxal 5'-phosphate + ADP + H(+). It catalyses the reaction pyridoxine + ATP = pyridoxine 5'-phosphate + ADP + H(+). The catalysed reaction is pyridoxamine + ATP = pyridoxamine 5'-phosphate + ADP + H(+). It participates in cofactor metabolism; pyridoxal 5'-phosphate salvage; pyridoxal 5'-phosphate from pyridoxal: step 1/1. Its pathway is cofactor metabolism; pyridoxal 5'-phosphate salvage; pyridoxine 5'-phosphate from pyridoxine: step 1/1. The protein operates within cofactor metabolism; pyridoxal 5'-phosphate salvage; pyridoxamine 5'-phosphate from pyridoxamine: step 1/1. Its function is as follows. B6-vitamer kinase involved in the salvage pathway of pyridoxal 5'-phosphate (PLP). Catalyzes the phosphorylation of pyridoxine (PN), pyridoxal (PL), and pyridoxamine (PM), forming their respective 5'-phosphorylated esters, i.e. PNP, PLP and PMP. In Bordetella bronchiseptica (strain ATCC BAA-588 / NCTC 13252 / RB50) (Alcaligenes bronchisepticus), this protein is Pyridoxine/pyridoxal/pyridoxamine kinase.